A 168-amino-acid chain; its full sequence is 6,7-dimethyl-8-ribityllumazine synthase (168 aa).

5-amino-6-(D-ribitylamino)uracil contacts are provided by residues tryptophan 31, 65–67, and 90–92; these read SFE and NVI. Position 95-96 (95-96) interacts with (2S)-2-hydroxy-3-oxobutyl phosphate; it reads ET. Residue histidine 98 is the Proton donor of the active site. Phenylalanine 123 provides a ligand contact to 5-amino-6-(D-ribitylamino)uracil. Arginine 137 serves as a coordination point for (2S)-2-hydroxy-3-oxobutyl phosphate.

This sequence belongs to the DMRL synthase family.

The enzyme catalyses (2S)-2-hydroxy-3-oxobutyl phosphate + 5-amino-6-(D-ribitylamino)uracil = 6,7-dimethyl-8-(1-D-ribityl)lumazine + phosphate + 2 H2O + H(+). It functions in the pathway cofactor biosynthesis; riboflavin biosynthesis; riboflavin from 2-hydroxy-3-oxobutyl phosphate and 5-amino-6-(D-ribitylamino)uracil: step 1/2. Catalyzes the formation of 6,7-dimethyl-8-ribityllumazine by condensation of 5-amino-6-(D-ribitylamino)uracil with 3,4-dihydroxy-2-butanone 4-phosphate. This is the penultimate step in the biosynthesis of riboflavin. This chain is 6,7-dimethyl-8-ribityllumazine synthase, found in Christiangramia forsetii (strain DSM 17595 / CGMCC 1.15422 / KT0803) (Gramella forsetii).